The following is a 493-amino-acid chain: Cobyric acid synthase (493 aa).

The 195-residue stretch at 246–440 folds into the GATase cobBQ-type domain; that stretch reads PIDIAVIKMP…IHGVFDGVVF (195 aa). Cys326 acts as the Nucleophile in catalysis. The active site involves His432.

The protein belongs to the CobB/CobQ family. CobQ subfamily.

The protein operates within cofactor biosynthesis; adenosylcobalamin biosynthesis. Its function is as follows. Catalyzes amidations at positions B, D, E, and G on adenosylcobyrinic A,C-diamide. NH(2) groups are provided by glutamine, and one molecule of ATP is hydrogenolyzed for each amidation. The sequence is that of Cobyric acid synthase from Clostridium botulinum (strain Okra / Type B1).